We begin with the raw amino-acid sequence, 389 residues long: Lipid-A-disaccharide synthase (389 aa).

The protein belongs to the LpxB family.

It carries out the reaction a lipid X + a UDP-2-N,3-O-bis[(3R)-3-hydroxyacyl]-alpha-D-glucosamine = a lipid A disaccharide + UDP + H(+). It functions in the pathway bacterial outer membrane biogenesis; LPS lipid A biosynthesis. In terms of biological role, condensation of UDP-2,3-diacylglucosamine and 2,3-diacylglucosamine-1-phosphate to form lipid A disaccharide, a precursor of lipid A, a phosphorylated glycolipid that anchors the lipopolysaccharide to the outer membrane of the cell. The protein is Lipid-A-disaccharide synthase of Burkholderia multivorans (strain ATCC 17616 / 249).